Reading from the N-terminus, the 65-residue chain is Beta-toxin Tf4a (65 aa).

One can recognise an LCN-type CS-alpha/beta domain in the interval 2 to 63 (KEGYPADSKG…VWDSATNKCG (62 aa)). Cystine bridges form between Cys-12–Cys-62, Cys-16–Cys-38, Cys-24–Cys-43, and Cys-28–Cys-45. Cysteine amide is present on Cys-62.

The protein belongs to the long (4 C-C) scorpion toxin superfamily. Sodium channel inhibitor family. Alpha subfamily. Expressed by the venom gland.

It localises to the secreted. Alpha toxins bind voltage-independently at site-3 of sodium channels (Nav) and inhibit the inactivation of the activated channels, thereby blocking neuronal transmission. This toxin is toxic to frogs but non-toxic to insect larvae (T.molitor), mammals (rats) and crustaceans (crabs) at the doses assayed. The polypeptide is Beta-toxin Tf4a (Tityus fasciolatus (Central Brazilian scorpion)).